Reading from the N-terminus, the 282-residue chain is 4-diphosphocytidyl-2-C-methyl-D-erythritol kinase (282 aa).

Residue Lys-9 is part of the active site. Residue 98–108 (PMGGGLGGGSS) participates in ATP binding. Residue Asp-140 is part of the active site.

It belongs to the GHMP kinase family. IspE subfamily. As to quaternary structure, homodimer.

The enzyme catalyses 4-CDP-2-C-methyl-D-erythritol + ATP = 4-CDP-2-C-methyl-D-erythritol 2-phosphate + ADP + H(+). It participates in isoprenoid biosynthesis; isopentenyl diphosphate biosynthesis via DXP pathway; isopentenyl diphosphate from 1-deoxy-D-xylulose 5-phosphate: step 3/6. Its function is as follows. Catalyzes the phosphorylation of the position 2 hydroxy group of 4-diphosphocytidyl-2C-methyl-D-erythritol. The polypeptide is 4-diphosphocytidyl-2-C-methyl-D-erythritol kinase (Salmonella heidelberg (strain SL476)).